Here is a 169-residue protein sequence, read N- to C-terminus: Unfolded protein response-inducible protein 1 (169 aa).

In terms of biological role, involved in the unfolded protein response (UPR), a transcriptional response which up-regulates genes that enable cells to cope with misfolded, endoplasmic reticulum-retained proteins. UPR is part of the endoplasmic reticulum quality control (ERQC) which prevents the exit of misfolded secretory and membrane proteins from the endoplasmic reticulum. The polypeptide is Unfolded protein response-inducible protein 1 (ULI1) (Saccharomyces cerevisiae (strain ATCC 204508 / S288c) (Baker's yeast)).